Here is a 227-residue protein sequence, read N- to C-terminus: Ribose-5-phosphate isomerase A (227 aa).

Residues 26–29 (TGST), 82–85 (DGAD), and 95–98 (KGGG) each bind substrate. E104 functions as the Proton acceptor in the catalytic mechanism. K122 is a substrate binding site.

Belongs to the ribose 5-phosphate isomerase family. Homodimer.

The enzyme catalyses aldehydo-D-ribose 5-phosphate = D-ribulose 5-phosphate. It participates in carbohydrate degradation; pentose phosphate pathway; D-ribose 5-phosphate from D-ribulose 5-phosphate (non-oxidative stage): step 1/1. Catalyzes the reversible conversion of ribose-5-phosphate to ribulose 5-phosphate. This Streptococcus pyogenes serotype M28 (strain MGAS6180) protein is Ribose-5-phosphate isomerase A.